We begin with the raw amino-acid sequence, 264 residues long: Proliferating cell nuclear antigen 2 (264 aa).

A DNA-binding region spans residues 61 to 80 (RCDRNLSMGMNLGNMSKMLK).

The protein belongs to the PCNA family. In terms of assembly, homo- and heterotrimer. Interacts with POLH, ATXR5 and ATXR6.

It localises to the nucleus. This protein is an auxiliary protein of DNA polymerase delta and is involved in the control of eukaryotic DNA replication by increasing the polymerase's processibility during elongation of the leading strand. May be involved in UV resistance. This is Proliferating cell nuclear antigen 2 (PCNA2) from Arabidopsis thaliana (Mouse-ear cress).